The sequence spans 96 residues: Co-chaperonin GroES (96 aa).

Belongs to the GroES chaperonin family. Heptamer of 7 subunits arranged in a ring. Interacts with the chaperonin GroEL.

It is found in the cytoplasm. Functionally, together with the chaperonin GroEL, plays an essential role in assisting protein folding. The GroEL-GroES system forms a nano-cage that allows encapsulation of the non-native substrate proteins and provides a physical environment optimized to promote and accelerate protein folding. GroES binds to the apical surface of the GroEL ring, thereby capping the opening of the GroEL channel. The chain is Co-chaperonin GroES from Leptospira interrogans serogroup Icterohaemorrhagiae serovar copenhageni (strain Fiocruz L1-130).